Here is a 1143-residue protein sequence, read N- to C-terminus: AP-3 complex subunit delta (1143 aa).

HEAT repeat units lie at residues 129–166 (DLAR…RYPE), 167–203 (SLRP…RNPK), 205–242 (YLPL…HEPR), 245–279 (KKLI…SDHI), 280–317 (PLMK…IHPK), 318–354 (AVSE…KKNI), 356–389 (DIVF…MGTY), and 416–455 (LIAS…PTEG). 5 disordered regions span residues 520–541 (KIPS…DQNE), 634–692 (QEPI…RHPI), 704–728 (KQAN…PENI), 741–792 (HVGA…NDAL), and 829–899 (KKNA…QAAA). A compositionally biased stretch (acidic residues) spans 524–540 (LDDDDEEEEAQEEEDQN). A coiled-coil region spans residues 526–550 (DDDEEEEAQEEEDQNEITHEIVQEC). Over residues 653–662 (HQKKHHKHHR) the composition is skewed to basic residues. Acidic residues predominate over residues 666–675 (DGDDDEDDET). The stretch at 814–835 (TDIIKEKEREMAMLAKKNAKLS) forms a coiled coil. The span at 840 to 849 (PSTANYSEVT) shows a compositional bias: polar residues. Composition is skewed to low complexity over residues 854-867 (APAK…AAGS) and 881-899 (KPAA…QAAA). Residues 914-1016 (KTILDDDNFK…FTLLASPSSS (103 aa)) form the GAE domain.

The protein belongs to the adaptor complexes large subunit family. As to quaternary structure, adaptor protein complex 3 (AP-3) is a heterotetramer composed of two large adaptins (delta-type subunit and beta-type subunit), a medium adaptin (mu-type subunit) and a small adaptin (sigma-type subunit).

It localises to the endosome membrane. Part of the AP-3 complex, an adaptor-related complex which is essential for the compartmentalization of the endocytic pathway. The chain is AP-3 complex subunit delta (ap3d1) from Dictyostelium discoideum (Social amoeba).